Reading from the N-terminus, the 255-residue chain is D-aminoacyl-tRNA deacylase (255 aa).

Belongs to the DtdA deacylase family. In terms of assembly, monomer. Requires Zn(2+) as cofactor.

The enzyme catalyses a D-aminoacyl-tRNA + H2O = a tRNA + a D-alpha-amino acid + H(+). The catalysed reaction is glycyl-tRNA(Ala) + H2O = tRNA(Ala) + glycine + H(+). D-aminoacyl-tRNA deacylase with broad substrate specificity. By recycling D-aminoacyl-tRNA to D-amino acids and free tRNA molecules, this enzyme counteracts the toxicity associated with the formation of D-aminoacyl-tRNA entities in vivo. The chain is D-aminoacyl-tRNA deacylase from Methanocaldococcus jannaschii (strain ATCC 43067 / DSM 2661 / JAL-1 / JCM 10045 / NBRC 100440) (Methanococcus jannaschii).